The chain runs to 68 residues: MGSLSIWHWLIVLLIVVLVFGTKKLPGIGKDLGNAVKGFKEGMNEGAKDGQPPAKDAGRIIDGEADKK.

A helical membrane pass occupies residues 1–21 (MGSLSIWHWLIVLLIVVLVFG). The tract at residues 42–68 (GMNEGAKDGQPPAKDAGRIIDGEADKK) is disordered. Residues 56-68 (DAGRIIDGEADKK) are compositionally biased toward basic and acidic residues.

The protein belongs to the TatA/E family. In terms of assembly, the Tat system comprises two distinct complexes: a TatABC complex, containing multiple copies of TatA, TatB and TatC subunits, and a separate TatA complex, containing only TatA subunits. Substrates initially bind to the TatABC complex, which probably triggers association of the separate TatA complex to form the active translocon.

Its subcellular location is the cell inner membrane. Its function is as follows. Part of the twin-arginine translocation (Tat) system that transports large folded proteins containing a characteristic twin-arginine motif in their signal peptide across membranes. TatA could form the protein-conducting channel of the Tat system. This Chromobacterium violaceum (strain ATCC 12472 / DSM 30191 / JCM 1249 / CCUG 213 / NBRC 12614 / NCIMB 9131 / NCTC 9757 / MK) protein is Sec-independent protein translocase protein TatA.